We begin with the raw amino-acid sequence, 442 residues long: Exodeoxyribonuclease 7 large subunit (442 aa).

It belongs to the XseA family. In terms of assembly, heterooligomer composed of large and small subunits.

The protein localises to the cytoplasm. The catalysed reaction is Exonucleolytic cleavage in either 5'- to 3'- or 3'- to 5'-direction to yield nucleoside 5'-phosphates.. Its function is as follows. Bidirectionally degrades single-stranded DNA into large acid-insoluble oligonucleotides, which are then degraded further into small acid-soluble oligonucleotides. The sequence is that of Exodeoxyribonuclease 7 large subunit from Shewanella loihica (strain ATCC BAA-1088 / PV-4).